The chain runs to 323 residues: Mas-related G-protein coupled receptor member X1 (323 aa).

Over 1–30 the chain is Extracellular; the sequence is MDPTISSLSTESTTLNKTGHPSCRPILTLS. A glycan (N-linked (GlcNAc...) asparagine) is linked at N16. Residues 31 to 51 traverse the membrane as a helical segment; it reads FLVPIITLLGLAGNTIVLWLL. At 52-59 the chain is on the cytoplasmic side; it reads GFRMRRKA. A helical membrane pass occupies residues 60–80; that stretch reads ISVYVLNLSLADSFFLCCHFI. Over 81–100 the chain is Extracellular; that stretch reads DSLMRIMNFYGIYAHKLSKE. A helical transmembrane segment spans residues 101 to 121; the sequence is ILGNAAIIPYISGLSILSAIS. Residues 122 to 143 are Cytoplasmic-facing; that stretch reads TERCLSVLWPIWYHCHRPRNMS. The helical transmembrane segment at 144–164 threads the bilayer; the sequence is AIICVLIWVLSFLMGILDWFF. Topologically, residues 165–180 are extracellular; the sequence is SGFLGETHHHLWKNVD. The chain crosses the membrane as a helical span at residues 181 to 201; the sequence is FIVTAFLIFLFMLLFGSSLAL. At 202–226 the chain is on the cytoplasmic side; that stretch reads LVRILCGSRRKPLSRLYVTISLTVM. Residues 227 to 247 traverse the membrane as a helical segment; it reads VYLICGLPLGLYLFLLYWFGI. Residues 248–258 lie on the Extracellular side of the membrane; that stretch reads HLHYPFCHIYQ. Residues 259 to 279 form a helical membrane-spanning segment; the sequence is VTVLLSCVNSSANPIIYFLVG. Residues 280-323 lie on the Cytoplasmic side of the membrane; the sequence is SFRHRKKHRSLKMVLKRALEETPEEDEYTDSHVQKPTEISERRC.

Belongs to the G-protein coupled receptor 1 family. Mas subfamily. As to expression, uniquely localized in a subset of small dorsal root and trigeminal sensory neurons. Associated preferentially with IB4 class of small-diameter somatosensory afferents (also known as nociceptors).

The protein resides in the cell membrane. Functionally, orphan receptor activated by neuropeptides terminating in Arg-Phe or Arg-Phe-amide. Mediates its action by association with G proteins that activate a phosphatidylinositol-calcium second messenger system. Its effect is mediated by G(q) and G(11) proteins. May regulate the function of nociceptive neurons by modulation of pain perception. The polypeptide is Mas-related G-protein coupled receptor member X1 (Mrgprx1) (Rattus norvegicus (Rat)).